A 180-amino-acid chain; its full sequence is MRKMIAVLRLGHRPERDKRITTHVALTARAFGADKIIIAAEEDEHVKESVEDVVNRWGGPFEIEFNPSWKKILREWKDRGIIVHLTMYGIHIDDAIPRIKDELKSGKDLLIVVGAEKVPREVYEMADYNVAVGNQPHSEVAALAVFLDRLLDGAGLRKEFHNAKLKIVPQERGKKVLQLE.

Residues Leu-85, 114–118, and 132–139 each bind S-adenosyl-L-methionine; these read GAEKV and VGNQPHSE.

It belongs to the aTrm56 family. Homodimer.

Its subcellular location is the cytoplasm. The enzyme catalyses cytidine(56) in tRNA + S-adenosyl-L-methionine = 2'-O-methylcytidine(56) in tRNA + S-adenosyl-L-homocysteine + H(+). Specifically catalyzes the AdoMet-dependent 2'-O-ribose methylation of cytidine at position 56 in tRNAs. The sequence is that of tRNA (cytidine(56)-2'-O)-methyltransferase from Thermococcus kodakarensis (strain ATCC BAA-918 / JCM 12380 / KOD1) (Pyrococcus kodakaraensis (strain KOD1)).